The sequence spans 472 residues: Probable dipeptidase A (472 aa).

Residue Cys-10 is part of the active site.

Belongs to the peptidase C69 family.

It carries out the reaction an L-aminoacyl-L-amino acid + H2O = 2 an L-alpha-amino acid. The chain is Probable dipeptidase A (pepDA) from Streptococcus pyogenes serotype M18 (strain MGAS8232).